A 227-amino-acid chain; its full sequence is ATP synthase subunit delta (227 aa).

This sequence belongs to the ATPase delta chain family. As to quaternary structure, F-type ATPases have 2 components, F(1) - the catalytic core - and F(0) - the membrane proton channel. F(1) has five subunits: alpha(3), beta(3), gamma(1), delta(1), epsilon(1). F(0) has three main subunits: a(1), b(2) and c(10-14). The alpha and beta chains form an alternating ring which encloses part of the gamma chain. F(1) is attached to F(0) by a central stalk formed by the gamma and epsilon chains, while a peripheral stalk is formed by the delta and b chains.

The protein resides in the cell inner membrane. Functionally, f(1)F(0) ATP synthase produces ATP from ADP in the presence of a proton or sodium gradient. F-type ATPases consist of two structural domains, F(1) containing the extramembraneous catalytic core and F(0) containing the membrane proton channel, linked together by a central stalk and a peripheral stalk. During catalysis, ATP synthesis in the catalytic domain of F(1) is coupled via a rotary mechanism of the central stalk subunits to proton translocation. Its function is as follows. This protein is part of the stalk that links CF(0) to CF(1). It either transmits conformational changes from CF(0) to CF(1) or is implicated in proton conduction. This chain is ATP synthase subunit delta, found in Rhodopirellula baltica (strain DSM 10527 / NCIMB 13988 / SH1).